Reading from the N-terminus, the 987-residue chain is KAT8 regulatory NSL complex subunit 1-like protein (987 aa).

Lysine 134 is covalently cross-linked (Glycyl lysine isopeptide (Lys-Gly) (interchain with G-Cter in SUMO2)). Serine 462 is subject to Phosphoserine. The disordered stretch occupies residues 708 to 738 (RKKRHLSETALGERTKLEESDFQHTESGSHS). A compositionally biased stretch (basic and acidic residues) spans 718 to 731 (LGERTKLEESDFQH). A PEHE domain is found at 794-915 (EILTPSWRMV…QSQETKSLWW (122 aa)). Residue lysine 859 is modified to N6-acetyllysine. A disordered region spans residues 949–972 (GEIFGTSVPENGHHPKKQSDGMEE). The segment covering 959–972 (NGHHPKKQSDGMEE) has biased composition (basic and acidic residues).

Acetylated on lysine residues by KAT8 upon ionizing radiation-induced DNA damage; deacetylated by HDAC3.

The polypeptide is KAT8 regulatory NSL complex subunit 1-like protein (KANSL1L) (Homo sapiens (Human)).